The primary structure comprises 344 residues: Golgi-associated RAB2 interactor protein 1B (344 aa).

Residues 271–293 (FRSSRKVETNKNSSGKDSSREDS) are disordered.

It belongs to the GARIN family.

The protein localises to the golgi apparatus. Its function is as follows. RAB2B effector protein required for accurate acrosome formation and normal male fertility. In complex with RAB2A/RAB2B, seems to suppress excessive vesicle trafficking during acrosome formation. This is Golgi-associated RAB2 interactor protein 1B from Homo sapiens (Human).